The sequence spans 227 residues: Lipoprotein-releasing system ATP-binding protein LolD (227 aa).

Residues 5–227 (LICQNITKHY…QDGILRESNS (223 aa)) form the ABC transporter domain. Position 41 to 48 (41 to 48 (GSSGSGKS)) interacts with ATP.

It belongs to the ABC transporter superfamily. Lipoprotein translocase (TC 3.A.1.125) family. The complex is composed of two ATP-binding proteins (LolD) and two transmembrane proteins (LolC and LolE).

Its subcellular location is the cell inner membrane. Its function is as follows. Part of the ABC transporter complex LolCDE involved in the translocation of mature outer membrane-directed lipoproteins, from the inner membrane to the periplasmic chaperone, LolA. Responsible for the formation of the LolA-lipoprotein complex in an ATP-dependent manner. This Histophilus somni (strain 129Pt) (Haemophilus somnus) protein is Lipoprotein-releasing system ATP-binding protein LolD.